Reading from the N-terminus, the 453-residue chain is Phenylalanine-4-hydroxylase (453 aa).

At alanine 2 the chain carries N-acetylalanine. A Phosphoserine; by PKA modification is found at serine 16. The ACT domain occupies 36–114 (SLIFSLKEEV…TVHELSRDKE (79 aa)). Histidine 285, histidine 290, and glutamate 330 together coordinate Fe cation.

The protein belongs to the biopterin-dependent aromatic amino acid hydroxylase family. Homodimer and homotetramer. Fe(2+) is required as a cofactor. Phosphorylation at Ser-16 increases basal activity and facilitates activation by the substrate phenylalanine.

The enzyme catalyses (6R)-L-erythro-5,6,7,8-tetrahydrobiopterin + L-phenylalanine + O2 = (4aS,6R)-4a-hydroxy-L-erythro-5,6,7,8-tetrahydrobiopterin + L-tyrosine. The protein operates within amino-acid degradation; L-phenylalanine degradation; acetoacetate and fumarate from L-phenylalanine: step 1/6. N-terminal region of PAH is thought to contain allosteric binding sites for phenylalanine and to constitute an 'inhibitory' domain that regulates the activity of a catalytic domain in the C-terminal portion of the molecule. Catalyzes the hydroxylation of L-phenylalanine to L-tyrosine. The sequence is that of Phenylalanine-4-hydroxylase (Pah) from Rattus norvegicus (Rat).